Consider the following 61-residue polypeptide: Large ribosomal subunit protein bL32 (61 aa).

It belongs to the bacterial ribosomal protein bL32 family.

The chain is Large ribosomal subunit protein bL32 from Acidithiobacillus ferrooxidans (strain ATCC 23270 / DSM 14882 / CIP 104768 / NCIMB 8455) (Ferrobacillus ferrooxidans (strain ATCC 23270)).